We begin with the raw amino-acid sequence, 174 residues long: Pectinesterase inhibitor 12 (174 aa).

The N-terminal stretch at M1–A20 is a signal peptide. 2 disulfides stabilise this stretch: C28–C43 and C100–C140. The N-linked (GlcNAc...) asparagine glycan is linked to N129.

This sequence belongs to the PMEI family.

The protein resides in the secreted. It is found in the extracellular space. Its subcellular location is the apoplast. Functionally, pectin methylesterase (PME) inhibitor involved in the maintenance of cell wall integrity in response to necrotrophic pathogens. Modulates PME activity and pectin methylesterification during infection by Botrytis cinerea and contributes to resistance against the pathogen. This chain is Pectinesterase inhibitor 12, found in Arabidopsis thaliana (Mouse-ear cress).